The chain runs to 375 residues: Actin, cytoplasmic (375 aa).

It belongs to the actin family.

It localises to the cytoplasm. It is found in the cytoskeleton. It carries out the reaction ATP + H2O = ADP + phosphate + H(+). In terms of biological role, actins are highly conserved proteins that are involved in various types of cell motility and are ubiquitously expressed in all eukaryotic cells. The protein is Actin, cytoplasmic of Sterkiella nova (Ciliate).